The primary structure comprises 1168 residues: DNA-directed RNA polymerase subunit beta (1168 aa).

This sequence belongs to the RNA polymerase beta chain family. In terms of assembly, the RNAP catalytic core consists of 2 alpha, 1 beta, 1 beta' and 1 omega subunit. When a sigma factor is associated with the core the holoenzyme is formed, which can initiate transcription.

It carries out the reaction RNA(n) + a ribonucleoside 5'-triphosphate = RNA(n+1) + diphosphate. Its function is as follows. DNA-dependent RNA polymerase catalyzes the transcription of DNA into RNA using the four ribonucleoside triphosphates as substrates. In Corynebacterium kroppenstedtii (strain DSM 44385 / JCM 11950 / CIP 105744 / CCUG 35717), this protein is DNA-directed RNA polymerase subunit beta.